Here is a 331-residue protein sequence, read N- to C-terminus: Histone-lysine N-methyltransferase, H3 lysine-9 specific dim-5 (331 aa).

One can recognise a Pre-SET domain in the interval 77-159; that stretch reads VGCSCASDEE…DCPNRVVERG (83 aa). Cysteine 79, cysteine 81, cysteine 87, cysteine 92, cysteine 94, cysteine 141, cysteine 145, cysteine 147, and cysteine 151 together coordinate Zn(2+). The 136-residue stretch at 162-297 folds into the SET domain; sequence VPLQIFRTKD…KGTELTFDYV (136 aa). Residues 172–174, aspartate 215, tyrosine 217, arginine 251, and 254–255 each bind S-adenosyl-L-methionine; these read RGW and NH. Zn(2+) is bound by residues cysteine 257, cysteine 319, cysteine 321, and cysteine 326. The region spanning 315-331 is the Post-SET domain; the sequence is EMTKCLCGTAKCRGYLW.

This sequence belongs to the class V-like SAM-binding methyltransferase superfamily. Histone-lysine methyltransferase family. Suvar3-9 subfamily.

It is found in the nucleus. The protein localises to the chromosome. The catalysed reaction is L-lysyl(9)-[histone H3] + 3 S-adenosyl-L-methionine = N(6),N(6),N(6)-trimethyl-L-lysyl(9)-[histone H3] + 3 S-adenosyl-L-homocysteine + 3 H(+). Its function is as follows. Histone methyltransferase that specifically trimethylates histone H3 to form H3K9me3. H3K9me3 marks chromatin regions for DNA methylation. Dim-5 recognizes Arg-8 to Gly-12 of the H3 tail with Thr-11 and Gly-12 being the most important specificity determinants, the recognition of whcih is important to distinguish H3K9 from H3K27 and H4K20. The polypeptide is Histone-lysine N-methyltransferase, H3 lysine-9 specific dim-5 (dim-5) (Neurospora crassa (strain ATCC 24698 / 74-OR23-1A / CBS 708.71 / DSM 1257 / FGSC 987)).